Consider the following 206-residue polypeptide: Urease accessory protein UreG (206 aa).

14 to 21 (GPVGSGKT) serves as a coordination point for GTP.

Belongs to the SIMIBI class G3E GTPase family. UreG subfamily. In terms of assembly, homodimer. UreD, UreF and UreG form a complex that acts as a GTP-hydrolysis-dependent molecular chaperone, activating the urease apoprotein by helping to assemble the nickel containing metallocenter of UreC. The UreE protein probably delivers the nickel.

Its subcellular location is the cytoplasm. Its function is as follows. Facilitates the functional incorporation of the urease nickel metallocenter. This process requires GTP hydrolysis, probably effectuated by UreG. In Methylocella silvestris (strain DSM 15510 / CIP 108128 / LMG 27833 / NCIMB 13906 / BL2), this protein is Urease accessory protein UreG.